Consider the following 133-residue polypeptide: UPF0134 protein MPN_151 (133 aa).

Belongs to the UPF0134 family.

The sequence is that of UPF0134 protein MPN_151 from Mycoplasma pneumoniae (strain ATCC 29342 / M129 / Subtype 1) (Mycoplasmoides pneumoniae).